We begin with the raw amino-acid sequence, 376 residues long: DNA methyltransferase CcrM (376 aa).

One can recognise an RAMA domain in the interval K273 to N370.

This sequence belongs to the N(4)/N(6)-methyltransferase family.

It catalyses the reaction a 2'-deoxyadenosine in DNA + S-adenosyl-L-methionine = an N(6)-methyl-2'-deoxyadenosine in DNA + S-adenosyl-L-homocysteine + H(+). In terms of biological role, a beta subtype methylase that recognizes the double-stranded sequence 5'-GANTC-3' and methylates A-2 on both strands. Overexpression leads to many branched and bloated cells, two to three times the size of wild-type cells, and cells that have 1-3 times the normal amount of DNA. Contributes to the accurate cell-cycle control of DNA replication and cellular morphology. Can fully replace its ortholog in C.crescentus. This is DNA methyltransferase CcrM (smeIM) from Rhizobium meliloti (strain 1021) (Ensifer meliloti).